The primary structure comprises 56 residues: Large ribosomal subunit protein bL33 (56 aa).

Belongs to the bacterial ribosomal protein bL33 family.

The polypeptide is Large ribosomal subunit protein bL33 (Helicobacter hepaticus (strain ATCC 51449 / 3B1)).